A 163-amino-acid chain; its full sequence is uncharacterized protein (163 aa).

The next 4 helical transmembrane spans lie at 19-39, 63-83, 87-107, and 119-139; these read GPPS…SEGI, FFAD…LLGL, VAAV…KLRA, and FWGM…LIFL.

This sequence belongs to the DoxX family.

It is found in the cell membrane. This is an uncharacterized protein from Mycobacterium tuberculosis (strain ATCC 25618 / H37Rv).